The following is a 501-amino-acid chain: Glucose-6-phosphate exchanger SLC37A2 (501 aa).

The helical transmembrane segment at serine 19–serine 39 threads the bilayer. N-linked (GlcNAc...) asparagine glycans are attached at residues asparagine 53, asparagine 62, and asparagine 68. The next 5 helical transmembrane spans lie at glycine 88–phenylalanine 108, leucine 118–isoleucine 140, methionine 142–valine 164, phenylalanine 179–alanine 199, and serine 210–isoleucine 230. Over residues proline 240–aspartate 252 the composition is skewed to basic and acidic residues. Residues proline 240–glutamate 266 form a disordered region. 6 helical membrane-spanning segments follow: residues cysteine 303–phenylalanine 323, glycine 334–isoleucine 354, alanine 362–isoleucine 382, isoleucine 391–alanine 411, alanine 434–isoleucine 454, and valine 462–tyrosine 482.

It belongs to the major facilitator superfamily. Organophosphate:Pi antiporter (OPA) (TC 2.A.1.4) family. Highly expressed in bone marrow derived macrophages, and weakly in spleen.

The protein localises to the endoplasmic reticulum membrane. The catalysed reaction is D-glucose 6-phosphate(in) + phosphate(out) = D-glucose 6-phosphate(out) + phosphate(in). With respect to regulation, inhibited by vanadate but not by chlorogenic acid. In terms of biological role, inorganic phosphate and glucose-6-phosphate antiporter. May transport cytoplasmic glucose-6-phosphate into the lumen of the endoplasmic reticulum and translocate inorganic phosphate into the opposite direction. Independent of a lumenal glucose-6-phosphatase. May not play a role in homeostatic regulation of blood glucose levels. The sequence is that of Glucose-6-phosphate exchanger SLC37A2 from Mus musculus (Mouse).